Reading from the N-terminus, the 254-residue chain is Glutathione S-transferase F14 (254 aa).

Residues 4–85 (SKMKLHCGFI…YLAEQYKDVG (82 aa)) form the GST N-terminal domain. Glutathione contacts are provided by residues 42-43 (AK), 56-57 (EV), and 69-70 (EP). Residues 92 to 231 (DPKKRAIMSM…DLMKQRRLPI (140 aa)) form the GST C-terminal domain.

Belongs to the GST superfamily. Phi family.

It is found in the cytoplasm. Its subcellular location is the cytosol. The catalysed reaction is RX + glutathione = an S-substituted glutathione + a halide anion + H(+). Its function is as follows. May be involved in the conjugation of reduced glutathione to a wide number of exogenous and endogenous hydrophobic electrophiles and have a detoxification role against certain herbicides. This is Glutathione S-transferase F14 from Arabidopsis thaliana (Mouse-ear cress).